Consider the following 185-residue polypeptide: Ribosome-recycling factor (185 aa).

Residues alanine 138 to glycine 185 form a disordered region.

It belongs to the RRF family.

It localises to the cytoplasm. In terms of biological role, responsible for the release of ribosomes from messenger RNA at the termination of protein biosynthesis. May increase the efficiency of translation by recycling ribosomes from one round of translation to another. This Lactobacillus delbrueckii subsp. bulgaricus (strain ATCC BAA-365 / Lb-18) protein is Ribosome-recycling factor.